Consider the following 609-residue polypeptide: Autophagy-related protein 22-1 (609 aa).

4 helical membrane passes run 35–55, 117–137, 151–171, and 176–196; these read YGWA…PITL, TASF…ILII, LLLM…LGVV, and MVGA…FVLL. The span at 214-231 shows a compositional bias: basic and acidic residues; it reads AREPRPALDDSRAQEGHS. The interval 214 to 240 is disordered; the sequence is AREPRPALDDSRAQEGHSDTTNGIEHG. Asn244 carries N-linked (GlcNAc...) asparagine glycosylation. The chain crosses the membrane as a helical span at residues 287-307; the sequence is IGIGYIGAIILQIVCILVVIA. Asn309 is a glycosylation site (N-linked (GlcNAc...) asparagine). 3 helical membrane passes run 317-337, 381-401, and 415-435; these read LVLF…ALWL, ILLF…VSGT, and AALG…AFSW. An N-linked (GlcNAc...) asparagine glycan is attached at Asn443. 4 helical membrane passes run 450-470, 477-497, 522-542, and 552-572; these read IIAC…GFIP, FLGL…GLVM, ALYA…VGII, and AFVF…LVDV.

This sequence belongs to the ATG22 family.

It localises to the vacuole membrane. Vacuolar effluxer which mediate the efflux of amino acids resulting from autophagic degradation. The release of autophagic amino acids allows the maintenance of protein synthesis and viability during nitrogen starvation. This is Autophagy-related protein 22-1 (atg22-1) from Aspergillus fumigatus (strain ATCC MYA-4609 / CBS 101355 / FGSC A1100 / Af293) (Neosartorya fumigata).